The following is an 88-amino-acid chain: SVENSRPTGQQLESLDLSAPWEQSLPCTERKPSATARLSRRGASLSSPAESSGSPQRRGLSAPSSRQIPAPQGAVLVQREKDLPNYNW.

A compositionally biased stretch (polar residues) spans 1–13; the sequence is SVENSRPTGQQLE. Positions 1-88 are disordered; sequence SVENSRPTGQ…REKDLPNYNW (88 aa). Low complexity predominate over residues 33-55; the sequence is SATARLSRRGASLSSPAESSGSP. Residues 78-88 are compositionally biased toward basic and acidic residues; that stretch reads QREKDLPNYNW. Tyrosine 86 bears the Phosphotyrosine mark.

It belongs to the KISS1 family. In terms of tissue distribution, in the hypothalamus, expression increases with puberty in both male and female monkeys. Robust expression in the region of the arcuate nucleus (ARC).

The protein resides in the secreted. In terms of biological role, metastasis suppressor protein. May regulate events downstream of cell-matrix adhesion, perhaps involving cytoskeletal reorganization. Generates a C-terminally amidated peptide, metastin which functions as the endogenous ligand of the G-protein coupled receptor GPR54. The receptor is essential for normal gonadotropin-released hormone physiology and for puberty. The hypothalamic KiSS1/GPR54 system is a pivotal factor in central regulation of the gonadotropic axis at puberty and in adulthood. The chain is Metastasis-suppressor KiSS-1 (KISS1) from Macaca mulatta (Rhesus macaque).